A 372-amino-acid polypeptide reads, in one-letter code: Probable leucine aminopeptidase MCYG_08380 (372 aa).

Positions 1-19 (MKVSVLAAVAAFAAATAIA) are cleaved as a signal peptide. Asn-96 carries an N-linked (GlcNAc...) asparagine glycan. Zn(2+)-binding residues include His-175 and Asp-194. 2 N-linked (GlcNAc...) asparagine glycosylation sites follow: Asn-195 and Asn-219. 2 residues coordinate Zn(2+): Glu-233 and Asp-260. A disulfide bridge connects residues Cys-305 and Cys-309. A Zn(2+)-binding site is contributed by His-338.

It belongs to the peptidase M28 family. M28E subfamily. Monomer. It depends on Zn(2+) as a cofactor.

The protein resides in the secreted. Its function is as follows. Probable extracellular aminopeptidase which contributes to pathogenicity. In Arthroderma otae (strain ATCC MYA-4605 / CBS 113480) (Microsporum canis), this protein is Probable leucine aminopeptidase MCYG_08380.